A 161-amino-acid chain; its full sequence is 2-C-methyl-D-erythritol 2,4-cyclodiphosphate synthase (161 aa).

A divalent metal cation is bound by residues D9 and H11. 4-CDP-2-C-methyl-D-erythritol 2-phosphate-binding positions include 9 to 11 (DFH) and 37 to 38 (HS). Residue H45 participates in a divalent metal cation binding. Residues 59 to 61 (DIG), 64 to 68 (FPDTD), 135 to 138 (TTTE), and R145 contribute to the 4-CDP-2-C-methyl-D-erythritol 2-phosphate site.

This sequence belongs to the IspF family. In terms of assembly, homotrimer. A divalent metal cation is required as a cofactor.

It catalyses the reaction 4-CDP-2-C-methyl-D-erythritol 2-phosphate = 2-C-methyl-D-erythritol 2,4-cyclic diphosphate + CMP. The protein operates within isoprenoid biosynthesis; isopentenyl diphosphate biosynthesis via DXP pathway; isopentenyl diphosphate from 1-deoxy-D-xylulose 5-phosphate: step 4/6. In terms of biological role, involved in the biosynthesis of isopentenyl diphosphate (IPP) and dimethylallyl diphosphate (DMAPP), two major building blocks of isoprenoid compounds. Catalyzes the conversion of 4-diphosphocytidyl-2-C-methyl-D-erythritol 2-phosphate (CDP-ME2P) to 2-C-methyl-D-erythritol 2,4-cyclodiphosphate (ME-CPP) with a corresponding release of cytidine 5-monophosphate (CMP). This chain is 2-C-methyl-D-erythritol 2,4-cyclodiphosphate synthase, found in Leptospira interrogans serogroup Icterohaemorrhagiae serovar Lai (strain 56601).